The following is a 498-amino-acid chain: Putrescine N-hydroxylase (498 aa).

FAD is bound by residues Phe23, Asp43, Lys45, Trp50, His51, and Gln62. Positions 62 and 104 each coordinate NADP(+). Val127 is an FAD binding site. The NADP(+) site is built by Ser207, Arg231, Tyr275, and Leu309. 3 residues coordinate FAD: Asn386, Pro397, and Leu399. The span at 443–474 (LESNTHSAVTPSKTRQGLNPSAKSVQQPSIEP) shows a compositional bias: polar residues. A disordered region spans residues 443–498 (LESNTHSAVTPSKTRQGLNPSAKSVQQPSIEPQTALRIAPTGGNVSALMAPNKEAQ).

The protein belongs to the lysine N(6)-hydroxylase/L-ornithine N(5)-oxygenase family. FAD serves as cofactor.

It catalyses the reaction putrescine + NADPH + O2 = N-hydroxyputrescine + NADP(+) + H2O. The protein operates within siderophore biosynthesis. In terms of biological role, N-hydroxylating monooxygenase involved in the biosynthesis of the siderophore putrebactin. Catalyzes the N-hydroxylation of the aliphatic diamine putrescine into N-hydroxyputrescine (NHP). This is Putrescine N-hydroxylase from Shewanella oneidensis (strain ATCC 700550 / JCM 31522 / CIP 106686 / LMG 19005 / NCIMB 14063 / MR-1).